The primary structure comprises 220 residues: Small ribosomal subunit protein uS3c (220 aa).

The 82-residue stretch at 39 to 120 (IRDFIKNYVK…KLIIDIIRIT (82 aa)) folds into the KH type-2 domain.

Belongs to the universal ribosomal protein uS3 family. As to quaternary structure, part of the 30S ribosomal subunit.

Its subcellular location is the plastid. This Epifagus virginiana (Beechdrops) protein is Small ribosomal subunit protein uS3c (rps3).